A 541-amino-acid chain; its full sequence is Chaperonin GroEL (541 aa).

ATP contacts are provided by residues 29 to 32 (TIGP), 86 to 90 (DGTTT), Gly-413, and Asp-494.

The protein belongs to the chaperonin (HSP60) family. As to quaternary structure, forms a cylinder of 14 subunits composed of two heptameric rings stacked back-to-back. Interacts with the co-chaperonin GroES.

The protein localises to the cytoplasm. It catalyses the reaction ATP + H2O + a folded polypeptide = ADP + phosphate + an unfolded polypeptide.. Functionally, together with its co-chaperonin GroES, plays an essential role in assisting protein folding. The GroEL-GroES system forms a nano-cage that allows encapsulation of the non-native substrate proteins and provides a physical environment optimized to promote and accelerate protein folding. The sequence is that of Chaperonin GroEL from Lachnospira eligens (strain ATCC 27750 / DSM 3376 / VPI C15-48 / C15-B4) (Eubacterium eligens).